We begin with the raw amino-acid sequence, 1420 residues long: Vacuolar protein sorting/targeting protein 10 (1420 aa).

The N-terminal stretch at 1 to 21 (MILRRLLLAGSLLLATAFTSA) is a signal peptide. Topologically, residues 22–1284 (KKADGPKISV…FFKKHPRLRG (1263 aa)) are lumenal. The stretch at 61-71 (YVSRDAGANWD) is one BNR 1 repeat. 2 N-linked (GlcNAc...) asparagine glycosylation sites follow: Asn-271 and Asn-321. 2 BNR repeats span residues 377–386 (ISFDDGRTFQ) and 644–654 (FLSRDHGKKWK). Residue Asn-893 is glycosylated (N-linked (GlcNAc...) asparagine). BNR repeat units follow at residues 1028 to 1038 (FITRDAGITWE) and 1070 to 1079 (YSLDEGRSWK). A helical transmembrane segment spans residues 1285-1305 (IGLFFVILIPICLAATAGYYV). Topologically, residues 1306 to 1331 (YNHWDGKFGRIRLGETGSGGLFDRDS) are cytoplasmic. The chain crosses the membrane as a helical span at residues 1332–1352 (LLVSIPVSMVAGVVAVITALP). Topologically, residues 1353 to 1420 (LLVSSLWRSV…EEGDERNGQV (68 aa)) are lumenal. Residues 1397-1414 (DEDELLGTDDFDDDEEGD) are compositionally biased toward acidic residues. Residues 1397–1420 (DEDELLGTDDFDDDEEGDERNGQV) are disordered.

This sequence belongs to the VPS10-related sortilin family.

The protein resides in the golgi apparatus. The protein localises to the trans-Golgi network membrane. It is found in the prevacuolar compartment membrane. Functionally, functions as a sorting receptor in the Golgi compartment required for the intracellular sorting and delivery of soluble vacuolar proteins, like carboxypeptidase Y (CPY) and proteinase A. Executes multiple rounds of sorting by cycling between the late Golgi and a prevacuolar endosome-like compartment. This is Vacuolar protein sorting/targeting protein 10 (VPS10) from Ajellomyces capsulatus (strain H143) (Darling's disease fungus).